The sequence spans 201 residues: Recombination protein RecR (201 aa).

A C4-type zinc finger spans residues 57 to 72 (CTHCRTFTEEESCAIC). Positions 81–176 (GFLCVVEQPS…KVSRIAHGIP (96 aa)) constitute a Toprim domain.

It belongs to the RecR family.

May play a role in DNA repair. It seems to be involved in an RecBC-independent recombinational process of DNA repair. It may act with RecF and RecO. The chain is Recombination protein RecR from Histophilus somni (strain 129Pt) (Haemophilus somnus).